Reading from the N-terminus, the 466-residue chain is ATP synthase subunit beta (466 aa).

Gly-153–Thr-160 contacts ATP.

This sequence belongs to the ATPase alpha/beta chains family. As to quaternary structure, F-type ATPases have 2 components, CF(1) - the catalytic core - and CF(0) - the membrane proton channel. CF(1) has five subunits: alpha(3), beta(3), gamma(1), delta(1), epsilon(1). CF(0) has three main subunits: a(1), b(2) and c(9-12). The alpha and beta chains form an alternating ring which encloses part of the gamma chain. CF(1) is attached to CF(0) by a central stalk formed by the gamma and epsilon chains, while a peripheral stalk is formed by the delta and b chains.

It is found in the cell membrane. The catalysed reaction is ATP + H2O + 4 H(+)(in) = ADP + phosphate + 5 H(+)(out). Functionally, produces ATP from ADP in the presence of a proton gradient across the membrane. The catalytic sites are hosted primarily by the beta subunits. In Leuconostoc citreum (strain KM20), this protein is ATP synthase subunit beta.